The following is a 215-amino-acid chain: C-type lectin domain family 4 member D (215 aa).

Residues 1–17 lie on the Cytoplasmic side of the membrane; sequence MGLEKPQSKLEGGMHPQ. A helical; Signal-anchor for type II membrane protein transmembrane segment spans residues 18 to 38; it reads LIPSVIAVVFILLLSVCFIAS. The Extracellular segment spans residues 39–215; that stretch reads CLVTHHNFSR…ICKIPGTTLN (177 aa). Asparagine 45 carries an N-linked (GlcNAc...) asparagine glycan. A disulfide bridge links cysteine 84 with cysteine 95. Residues 91–208 form the C-type lectin domain; it reads FQSNCYFPLT…CNFEASRICK (118 aa). Asparagine 102 and asparagine 111 each carry an N-linked (GlcNAc...) asparagine glycan. 2 disulfide bridges follow: cysteine 112/cysteine 207 and cysteine 182/cysteine 199. Ca(2+) is bound by residues glutamate 173, aspartate 175, asparagine 195, and aspartate 196.

In terms of assembly, heterodimer with CLEC4E; disulfide-linked. CLEC4E acts as a bridge for interaction between CLEC4D and FCER1G to form a functional complex. Heterodimer with CLEC6A; this heterodimer forms a pattern recognition receptor (PRR) against fungal infection. In terms of tissue distribution, expressed weakly in peripheral blood leukocytes, bone marrow and spleen. Expression is confined mostly in monocytes and macrophage and seems to be up-regulated by IL-6, IL-10, TNF-alpha and IFN-gamma.

Its subcellular location is the cell membrane. Functionally, calcium-dependent lectin that acts as a pattern recognition receptor (PRR) of the innate immune system: recognizes damage-associated molecular patterns (DAMPs) of pathogen-associated molecular patterns (PAMPs) of bacteria and fungi. The PAMPs include alpha-mannans on C.albicans hypheas and mycobacterial trehalose 6,6'-dimycolate (TDM). Interacts with signaling adapter Fc receptor gamma chain/FCER1G, likely via CLEC4E, to form a functional complex in myeloid cells. Binding of mycobacterial TDM or C.albicans alpha-mannans to this receptor complex leads to phosphorylation of the immunoreceptor tyrosine-based activation motif (ITAM) of FCER1G, triggering activation of SYK, CARD9 and NF-kappa-B, consequently driving maturation of antigen-presenting cells and shaping antigen-specific priming of T-cells toward effector T-helper 1 and T-helper 17 cell subtypes. The heterodimer formed with CLEC6A is active against fungal infection. Functions as an endocytic receptor. May be involved in antigen uptake at the site of infection, either for clearance of the antigen, or for processing and further presentation to T-cells. In Homo sapiens (Human), this protein is C-type lectin domain family 4 member D.